A 228-amino-acid chain; its full sequence is Ribosomal RNA large subunit methyltransferase E (228 aa).

S-adenosyl-L-methionine is bound by residues Gly76, Trp78, Asp99, Asp115, and Asp139. The active-site Proton acceptor is the Lys179.

It belongs to the class I-like SAM-binding methyltransferase superfamily. RNA methyltransferase RlmE family.

The protein localises to the cytoplasm. The enzyme catalyses uridine(2552) in 23S rRNA + S-adenosyl-L-methionine = 2'-O-methyluridine(2552) in 23S rRNA + S-adenosyl-L-homocysteine + H(+). In terms of biological role, specifically methylates the uridine in position 2552 of 23S rRNA at the 2'-O position of the ribose in the fully assembled 50S ribosomal subunit. This chain is Ribosomal RNA large subunit methyltransferase E, found in Bradyrhizobium diazoefficiens (strain JCM 10833 / BCRC 13528 / IAM 13628 / NBRC 14792 / USDA 110).